The sequence spans 281 residues: Small ribosomal subunit protein uS2 (281 aa).

Residues 229–281 (RSGANKTEGEAAEQPMAAWEKELLTNEAPAEASAEAAAPAAAEGETAEAPKAE) form a disordered region. A compositionally biased stretch (low complexity) spans 255–275 (EAPAEASAEAAAPAAAEGETA).

This sequence belongs to the universal ribosomal protein uS2 family.

This Bifidobacterium longum subsp. infantis (strain ATCC 15697 / DSM 20088 / JCM 1222 / NCTC 11817 / S12) protein is Small ribosomal subunit protein uS2.